The primary structure comprises 739 residues: Phosphoribosylformylglycinamidine synthase subunit PurL (739 aa).

The active site involves His-54. Positions 57 and 96 each coordinate ATP. Glu-98 contributes to the Mg(2+) binding site. Residues 99-102 (SHNH) and Arg-121 contribute to the substrate site. His-100 acts as the Proton acceptor in catalysis. Residue Asp-122 participates in Mg(2+) binding. Substrate is bound at residue Gln-245. Asp-273 is a binding site for Mg(2+). 317 to 319 (ESQ) provides a ligand contact to substrate. Residues Asp-500 and Gly-537 each coordinate ATP. Asn-538 provides a ligand contact to Mg(2+). Ser-540 serves as a coordination point for substrate.

This sequence belongs to the FGAMS family. Monomer. Part of the FGAM synthase complex composed of 1 PurL, 1 PurQ and 2 PurS subunits.

The protein resides in the cytoplasm. The catalysed reaction is N(2)-formyl-N(1)-(5-phospho-beta-D-ribosyl)glycinamide + L-glutamine + ATP + H2O = 2-formamido-N(1)-(5-O-phospho-beta-D-ribosyl)acetamidine + L-glutamate + ADP + phosphate + H(+). It functions in the pathway purine metabolism; IMP biosynthesis via de novo pathway; 5-amino-1-(5-phospho-D-ribosyl)imidazole from N(2)-formyl-N(1)-(5-phospho-D-ribosyl)glycinamide: step 1/2. Part of the phosphoribosylformylglycinamidine synthase complex involved in the purines biosynthetic pathway. Catalyzes the ATP-dependent conversion of formylglycinamide ribonucleotide (FGAR) and glutamine to yield formylglycinamidine ribonucleotide (FGAM) and glutamate. The FGAM synthase complex is composed of three subunits. PurQ produces an ammonia molecule by converting glutamine to glutamate. PurL transfers the ammonia molecule to FGAR to form FGAM in an ATP-dependent manner. PurS interacts with PurQ and PurL and is thought to assist in the transfer of the ammonia molecule from PurQ to PurL. This chain is Phosphoribosylformylglycinamidine synthase subunit PurL, found in Bacillus cereus (strain ATCC 14579 / DSM 31 / CCUG 7414 / JCM 2152 / NBRC 15305 / NCIMB 9373 / NCTC 2599 / NRRL B-3711).